Reading from the N-terminus, the 595-residue chain is Probable inactive glycosyltransferase 25 family member 3 (595 aa).

Positions 1–24 (MRAAPAAPLLQLLLLLGPRPEAAG) are cleaved as a signal peptide. N-linked (GlcNAc...) asparagine glycosylation is found at Asn75, Asn153, Asn237, and Asn360. The disordered stretch occupies residues 576–595 (RLDLAGGSGHSLRPHPRDEL). The Prevents secretion from ER signature appears at 592-595 (RDEL).

The protein belongs to the glycosyltransferase 25 family.

Its subcellular location is the endoplasmic reticulum lumen. Its function is as follows. Probable cell adhesion protein involved in leukocyte transmigration across the blood-brain barrier. Does not express any beta-galactosyltransferase activity in vitro. The sequence is that of Probable inactive glycosyltransferase 25 family member 3 (CERCAM) from Bos taurus (Bovine).